Here is a 201-residue protein sequence, read N- to C-terminus: Lymphotoxin-alpha (201 aa).

Residues 1 to 27 (MTSSGVLCLLGALSLQVLLLQPPGAQG) form the signal peptide. Residues 23–52 (PGAQGAPNPDNSHSSSPAPPQTAQHLSQKS) are disordered. Polar residues predominate over residues 31-51 (PDNSHSSSPAPPQTAQHLSQK). In terms of domain architecture, THD spans 60–201 (PAAHLVGDPS…SSVFFGAFAL (142 aa)). Asn-93 carries N-linked (GlcNAc...) asparagine glycosylation. A disulfide bridge connects residues Cys-117 and Cys-152.

It belongs to the tumor necrosis factor family. Homotrimer, and heterotrimer of either two LTB and one LTA subunits or (less prevalent) two LTA and one LTB subunits. Interacts with TNFRSF14.

The protein localises to the secreted. Its subcellular location is the membrane. Cytokine that in its homotrimeric form binds to TNFRSF1A/TNFR1, TNFRSF1B/TNFBR and TNFRSF14/HVEM. In its heterotrimeric form with LTB binds to TNFRSF3/LTBR. Lymphotoxin is produced by lymphocytes and is cytotoxic for a wide range of tumor cells in vitro and in vivo. This is Lymphotoxin-alpha (LTA) from Notamacropus eugenii (Tammar wallaby).